The primary structure comprises 427 residues: Trigger factor (427 aa).

The PPIase FKBP-type domain occupies 163-248 (GDTVVIDFVG…IHEVKAKEVP (86 aa)).

It belongs to the FKBP-type PPIase family. Tig subfamily.

It localises to the cytoplasm. It carries out the reaction [protein]-peptidylproline (omega=180) = [protein]-peptidylproline (omega=0). Functionally, involved in protein export. Acts as a chaperone by maintaining the newly synthesized protein in an open conformation. Functions as a peptidyl-prolyl cis-trans isomerase. This Streptococcus suis (strain 05ZYH33) protein is Trigger factor.